A 161-amino-acid polypeptide reads, in one-letter code: Sterile alpha motif domain-containing protein 12 (161 aa).

The segment at 44–64 (QKVPDQKGTPKRLQGEAETAK) is disordered. Residues 77 to 143 (WTQQDVCKWL…LQQVLQLKVR (67 aa)) enclose the SAM domain.

The sequence is that of Sterile alpha motif domain-containing protein 12 (Samd12) from Mus musculus (Mouse).